The sequence spans 299 residues: Heterodisulfide reductase subunit B-like protein (299 aa).

The protein belongs to the HdrB family. In terms of assembly, the heterodisulfide reductase is composed of three subunits; HdlA, HdlB and HdlC. It forms a complex with the F420-non-reducing hydrogenase (Mvh), which provides the reducing equivalents to the heterodisulfide reductase.

Its subcellular location is the cytoplasm. Has oxidoreductase activity. The Hdl and Mvh subunits may together mediate electron transfer from hydrogen to an unidentified electron acceptor on the cytoplasmic side of the membrane. This Archaeoglobus profundus (strain DSM 5631 / JCM 9629 / NBRC 100127 / Av18) protein is Heterodisulfide reductase subunit B-like protein (hdlB).